The sequence spans 165 residues: Putative ankyrin repeat domain-containing protein 20A5 (165 aa).

3 ANK repeats span residues 66-95 (QHRT…QIDI), 99-128 (ENRT…NPNL), and 132-161 (YGNT…NIEA).

The sequence is that of Putative ankyrin repeat domain-containing protein 20A5 (ANKRD20A5P) from Homo sapiens (Human).